We begin with the raw amino-acid sequence, 1525 residues long: Multidrug resistance protein mrp-7 (1525 aa).

The Extracellular portion of the chain corresponds to 1–24 (MLSSFCGDGHPFSTGLPNVSICAQ). An N-linked (GlcNAc...) asparagine glycan is attached at N18. The chain crosses the membrane as a helical span at residues 25–45 (HTVLVWVPAAFFLLTLPFLSA). The Cytoplasmic portion of the chain corresponds to 46-66 (QCHLTAQRFARLPFSAHFIIK). A helical transmembrane segment spans residues 67–87 (LLLVAFLAANSLATWCYVLFS). Residues 88 to 94 (KNSYAAA) lie on the Extracellular side of the membrane. The helical transmembrane segment at 95–115 (YYVYPGLWVLVWTGTFLVHLI) threads the bilayer. The Cytoplasmic segment spans residues 116 to 118 (RLR). Residues 119–139 (CGLVSSGIQHVTSLIFLLCGA) traverse the membrane as a helical segment. At 140 to 165 (PEFYQWIRMENSNSFPNDLTTTDSAQ) the chain is on the extracellular side. The helical transmembrane segment at 166 to 186 (FLSIAYLSWYSALILYTFSLC) threads the bilayer. Over 187 to 346 (FADPRGAKTD…APFWKGMALS (160 aa)) the chain is Cytoplasmic. Residues 305–587 (LLASTLKFVS…IALLINQAVQ (283 aa)) enclose the ABC transmembrane type-1 1 domain. The helical transmembrane segment at 347-367 (ILMFSVSELRSLILNGYFYIM) threads the bilayer. At 368 to 434 (FRMGTKIQTS…SCPYQITFAL (67 aa)) the chain is on the extracellular side. The helical transmembrane segment at 435 to 455 (VYLFITLGYSALPGVVIMVIF) threads the bilayer. The Cytoplasmic portion of the chain corresponds to 456-535 (VPMNIISSMI…NILDSFNTAS (80 aa)). A helical transmembrane segment spans residues 536–556 (PFLVALFSFGTFVLSNPSHLL). Residues 557-561 (TPQIA) lie on the Extracellular side of the membrane. A helical transmembrane segment spans residues 562–582 (FVSLALFNQLRSPMTMIALLI). Residues 583 to 953 (NQAVQAVVSN…ATYQLYVKAA (371 aa)) lie on the Cytoplasmic side of the membrane. One can recognise an ABC transporter 1 domain in the interval 622–849 (VRVENLTASW…RGLFFDFMEE (228 aa)). Residue 659–666 (GKVGSGKS) coordinates ATP. The segment at 900–925 (ELTTQISTMSSPEKPPTGTSPAAATE) is disordered. Residues 954–974 (GYLLSIAFIGFFIVYMTLQIL) traverse the membrane as a helical segment. The region spanning 959–1245 (IAFIGFFIVY…AVRQVSEIEA (287 aa)) is the ABC transmembrane type-1 2 domain. The Extracellular segment spans residues 975–1005 (RSFWLSAWSDEYDPDSPSAHPMAKGWRLGVY). The helical transmembrane segment at 1006–1026 (GALGFSETACFFVALLALVFV) threads the bilayer. Residues 1027 to 1068 (GQRASKNLHGPLIHNLMRSPMSFYDTTPLGRILNRCAKDIET) are Cytoplasmic-facing. The chain crosses the membrane as a helical span at residues 1069–1089 (IDMMLPMNFRYLVMCVLQVAF). A topological domain (extracellular) is located at residue T1090. A helical transmembrane segment spans residues 1091-1111 (LIVIIISTPLFAVVILPLALI). At 1112–1184 (YLIFLRYYVP…RYSSLVSNRW (73 aa)) the chain is on the cytoplasmic side. A helical transmembrane segment spans residues 1185–1205 (LAVRLEFVGNCIIFFAALFAV). Topologically, residues 1206 to 1525 (LSKEFGWITS…ADAAEQDKHE (320 aa)) are extracellular. N-linked (GlcNAc...) asparagine glycosylation occurs at N1228. The region spanning 1282–1516 (VKFDGYSTRY…KNSAFAKMVA (235 aa)) is the ABC transporter 2 domain. 1316–1323 (GRTGAGKS) contributes to the ATP binding site. N-linked (GlcNAc...) asparagine glycosylation is found at N1358 and N1418.

Belongs to the ABC transporter superfamily. ABCC family. Conjugate transporter (TC 3.A.1.208) subfamily. As to expression, expressed in head neurons, including the dopamine (DA) motor neuron, and other cells in the body.

Its subcellular location is the cell membrane. In terms of biological role, negatively regulates cellular toxicity by mediating the export of environmental toxicants such as methylmercury out of the cell. Plays a role in inhibiting methylmercury-induced dopamine (DA) motor neuron degeneration. Not involved in Mn(2+)- or Al(3+)-associated toxicity. The sequence is that of Multidrug resistance protein mrp-7 from Caenorhabditis elegans.